A 698-amino-acid polypeptide reads, in one-letter code: Interleukin-17 receptor C (698 aa).

The signal sequence occupies residues 1–21 (MPVSWFLLSLALGRNPVVVSL). The Extracellular portion of the chain corresponds to 22–464 (ERLMEPQDTA…CPMDKYIHRR (443 aa)). An N-linked (GlcNAc...) asparagine glycan is attached at asparagine 182. Cysteines 190 and 202 form a disulfide. N-linked (GlcNAc...) asparagine glycosylation is found at asparagine 209, asparagine 249, asparagine 255, and asparagine 259. 6 disulfides stabilise this stretch: cysteine 266–cysteine 316, cysteine 268–cysteine 284, cysteine 325–cysteine 334, cysteine 364–cysteine 378, cysteine 406–cysteine 413, and cysteine 440–cysteine 455. The chain crosses the membrane as a helical span at residues 465–485 (WVLVWLACLLLAAALFFFLLL). Topologically, residues 486-698 (KKDRRKAARG…WDLGPCTTLE (213 aa)) are cytoplasmic. One can recognise an SEFIR domain in the interval 496-645 (SRTALLLHSA…LPSQLPAFLD (150 aa)).

As to quaternary structure, homodimer; disulfide-linked. Heterodimer with IL17RA. Heterodimerization with IL17RA is independent of the cytoplasmic tail. Associates with non-glycosylated IL17RA constitutively. Binding of IL17A and IL17F induces association with glycosylated IL17RA. Forms complexes with 2:1 binding stoichiometry: two receptor chains for one interleukin molecule. IL17A homodimer preferentially drives the formation of IL17RA-IL17RC heterodimeric receptor complex, whereas IL17F homodimer forms predominantly complexes with IL17RC homodimer. IL17A-IL17F forms complexes with IL17RA-IL17RC, but with lower affinity when compared to IL17A homodimer. IL17RC chain cannot distinguish between IL17A and IL17F molecules, potentially enabling the formation of topologically distinct complexes. Interacts (through SEFIR domain and extended downstream region) with TRAF3IP2/ACT1 (phosphorylated). In terms of tissue distribution, highly expressed in colonic epithelial cells. Expressed in lung epithelial cells. Expressed in macrophages. Highly expressed in B-1a B cells and at a lower extent in B-1b and B-2 B cells (at protein level).

The protein resides in the cell membrane. In terms of biological role, receptor for IL17A and IL17F, major effector cytokines of innate and adaptive immune system involved in antimicrobial host defense and maintenance of tissue integrity. Receptor for IL17A and IL17F homodimers as part of a heterodimeric complex with IL17RA. Receptor for the heterodimer formed by IL17A and IL17B as part of a heterodimeric complex with IL17RA. Has also been shown to be the cognate receptor for IL17F and to bind IL17A with high affinity without the need for IL17RA. Upon binding of IL17F homodimer triggers downstream activation of TRAF6 and NF-kappa-B signaling pathway. Induces transcriptional activation of IL33, a potent cytokine that stimulates group 2 innate lymphoid cells and adaptive T-helper 2 cells involved in pulmonary allergic response to fungi. Promotes sympathetic innervation of peripheral organs by coordinating the communication between gamma-delta T cells and parenchymal cells. Stimulates sympathetic innervation of thermogenic adipose tissue by driving TGFB1 expression. Binding of IL17A-IL17F to IL17RA-IL17RC heterodimeric receptor complex triggers homotypic interaction of IL17RA and IL17RC chains with TRAF3IP2 adapter through SEFIR domains. This leads to downstream TRAF6-mediated activation of NF-kappa-B and MAPkinase pathways ultimately resulting in transcriptional activation of cytokines, chemokines, antimicrobial peptides and matrix metalloproteinases, with potential strong immune inflammation. Primarily induces neutrophil activation and recruitment at infection and inflammatory sites. Stimulates the production of antimicrobial beta-defensins DEFB1, DEFB103A, and DEFB104A by mucosal epithelial cells, limiting the entry of microbes through the epithelial barriers. The chain is Interleukin-17 receptor C (Il17rc) from Mus musculus (Mouse).